We begin with the raw amino-acid sequence, 111 residues long: MTNEADKFVVDVIYALPTQQKVISVSVLPGTSAIDIVRQSNMVSFFPEIELETVKLGVFSNVVKHDQVILPGQRVEIYRPLIADPKDVRRRRADKAKDEGRANKVTGGRVS.

Residues Val-88–Ser-111 form a disordered region.

This sequence belongs to the UPF0125 (RnfH) family.

The sequence is that of UPF0125 protein SO_1475 from Shewanella oneidensis (strain ATCC 700550 / JCM 31522 / CIP 106686 / LMG 19005 / NCIMB 14063 / MR-1).